The chain runs to 125 residues: Small ribosomal subunit protein uS13 (125 aa).

A disordered region spans residues 101-125 (QRTKTNARTRKGKRKTVANKKIAAK).

This sequence belongs to the universal ribosomal protein uS13 family. Part of the 30S ribosomal subunit. Forms a loose heterodimer with protein S19. Forms two bridges to the 50S subunit in the 70S ribosome.

In terms of biological role, located at the top of the head of the 30S subunit, it contacts several helices of the 16S rRNA. In the 70S ribosome it contacts the 23S rRNA (bridge B1a) and protein L5 of the 50S subunit (bridge B1b), connecting the 2 subunits; these bridges are implicated in subunit movement. Contacts the tRNAs in the A and P-sites. This chain is Small ribosomal subunit protein uS13, found in Borrelia duttonii (strain Ly).